The following is a 924-amino-acid chain: Translation initiation factor IF-2 (924 aa).

Positions 118-325 are disordered; that stretch reads PSTAHREELA…QAPVVGGVRL (208 aa). Pro residues-rich tracts occupy residues 150–173 and 192–201; these read APHPGHPGMPTGPHPGPAPKPGGR and IPRPPAPRPS. Over residues 202-212 the composition is skewed to low complexity; the sequence is ASPSSMSPRPG. Gly residues predominate over residues 229 to 295; it reads RPGGGRPGAP…GAAGAFGRPG (67 aa). Over residues 299–308 the composition is skewed to basic residues; the sequence is RRGRKSKRQK. The 172-residue stretch at 420–591 folds into the tr-type G domain; that stretch reads VRPPVVTVMG…AVLLTADAAL (172 aa). The segment at 429 to 436 is G1; that stretch reads GHVDHGKT. Residue 429–436 coordinates GTP; the sequence is GHVDHGKT. Residues 454–458 form a G2 region; sequence GITQH. Residues 479–482 are G3; the sequence is DTPG. GTP-binding positions include 479–483 and 533–536; these read DTPGH and NKID. Residues 533–536 are G4; it reads NKID. The interval 569-571 is G5; sequence SAK.

Belongs to the TRAFAC class translation factor GTPase superfamily. Classic translation factor GTPase family. IF-2 subfamily.

It localises to the cytoplasm. One of the essential components for the initiation of protein synthesis. Protects formylmethionyl-tRNA from spontaneous hydrolysis and promotes its binding to the 30S ribosomal subunits. Also involved in the hydrolysis of GTP during the formation of the 70S ribosomal complex. This is Translation initiation factor IF-2 from Mycobacterium leprae (strain Br4923).